The primary structure comprises 230 residues: DNA mismatch repair protein MutH (230 aa).

The protein belongs to the MutH family.

The protein resides in the cytoplasm. Its function is as follows. Sequence-specific endonuclease that cleaves unmethylated GATC sequences. It is involved in DNA mismatch repair. This Enterobacter sp. (strain 638) protein is DNA mismatch repair protein MutH.